A 280-amino-acid polypeptide reads, in one-letter code: NAD kinase (280 aa).

The active-site Proton acceptor is D67. NAD(+) contacts are provided by residues 67–68, R72, 138–139, D167, A175, 178–183, and Q237; these read DG, ND, and TAYSLS.

This sequence belongs to the NAD kinase family. A divalent metal cation serves as cofactor.

The protein localises to the cytoplasm. The enzyme catalyses NAD(+) + ATP = ADP + NADP(+) + H(+). Involved in the regulation of the intracellular balance of NAD and NADP, and is a key enzyme in the biosynthesis of NADP. Catalyzes specifically the phosphorylation on 2'-hydroxyl of the adenosine moiety of NAD to yield NADP. The polypeptide is NAD kinase (Aeropyrum pernix (strain ATCC 700893 / DSM 11879 / JCM 9820 / NBRC 100138 / K1)).